The chain runs to 715 residues: Polyribonucleotide nucleotidyltransferase (715 aa).

Mg(2+)-binding residues include D493 and D499. The KH domain maps to 560–619 (PRMITIKINPEKIRDVIGKGGSVIRALTEETGTTIDISDDGVVTIASTSSEGMAEAKKRI). The 69-residue stretch at 629–697 (GQVYEGTVLK…EKGRVRLSAK (69 aa)) folds into the S1 motif domain.

Belongs to the polyribonucleotide nucleotidyltransferase family. The cofactor is Mg(2+).

It localises to the cytoplasm. It catalyses the reaction RNA(n+1) + phosphate = RNA(n) + a ribonucleoside 5'-diphosphate. In terms of biological role, involved in mRNA degradation. Catalyzes the phosphorolysis of single-stranded polyribonucleotides processively in the 3'- to 5'-direction. The protein is Polyribonucleotide nucleotidyltransferase of Burkholderia vietnamiensis (strain G4 / LMG 22486) (Burkholderia cepacia (strain R1808)).